A 159-amino-acid chain; its full sequence is MPTKNDGAAVWELIHQIDNLDLNSSYSYLLWCDMFSETSIVVEEEGEVVGFISGFIHPNKPNTLFIWQVAVEAAQRGKGLGTHMLLQLLNRKRIAQVQYIEATVAPSNLPSQYLFLGLAKKLDTECVVGNYYTSVDFPRTGHEDEQLYKIGPIRRANNK.

The region spanning 1–138 (MPTKNDGAAV…GNYYTSVDFP (138 aa)) is the N-acetyltransferase domain.

The protein belongs to the acetyltransferase family. EctA subfamily.

It catalyses the reaction L-2,4-diaminobutanoate + acetyl-CoA = (2S)-4-acetamido-2-aminobutanoate + CoA + H(+). Its pathway is amine and polyamine biosynthesis; ectoine biosynthesis; L-ectoine from L-aspartate 4-semialdehyde: step 2/3. Its function is as follows. Catalyzes the acetylation of L-2,4-diaminobutyrate (DABA) to gamma-N-acetyl-alpha,gamma-diaminobutyric acid (ADABA) with acetyl coenzyme A. In Virgibacillus pantothenticus, this protein is L-2,4-diaminobutyric acid acetyltransferase (ectA).